A 237-amino-acid chain; its full sequence is 4-hydroxy-tetrahydrodipicolinate reductase (237 aa).

Residues 11–16 (GASGRM), 92–94 (GTT), and 116–119 (GSNF) contribute to the NAD(+) site. Catalysis depends on His148, which acts as the Proton donor/acceptor. His149 lines the (S)-2,3,4,5-tetrahydrodipicolinate pocket. The active-site Proton donor is Lys152. (S)-2,3,4,5-tetrahydrodipicolinate is bound at residue 158-159 (GS).

Belongs to the DapB family.

The protein resides in the cytoplasm. It catalyses the reaction (S)-2,3,4,5-tetrahydrodipicolinate + NAD(+) + H2O = (2S,4S)-4-hydroxy-2,3,4,5-tetrahydrodipicolinate + NADH + H(+). The enzyme catalyses (S)-2,3,4,5-tetrahydrodipicolinate + NADP(+) + H2O = (2S,4S)-4-hydroxy-2,3,4,5-tetrahydrodipicolinate + NADPH + H(+). The protein operates within amino-acid biosynthesis; L-lysine biosynthesis via DAP pathway; (S)-tetrahydrodipicolinate from L-aspartate: step 4/4. In terms of biological role, catalyzes the conversion of 4-hydroxy-tetrahydrodipicolinate (HTPA) to tetrahydrodipicolinate. The polypeptide is 4-hydroxy-tetrahydrodipicolinate reductase (Xylella fastidiosa (strain M12)).